A 362-amino-acid polypeptide reads, in one-letter code: 3-dehydroquinate synthase (362 aa).

Residues 71-76, 105-109, 129-130, Lys-142, Lys-151, and 169-172 contribute to the NAD(+) site; these read DGEQYK, GVVGD, TT, and CLKT. Zn(2+)-binding residues include Glu-184, His-247, and His-264.

It belongs to the sugar phosphate cyclases superfamily. Dehydroquinate synthase family. Co(2+) serves as cofactor. The cofactor is Zn(2+). It depends on NAD(+) as a cofactor.

Its subcellular location is the cytoplasm. The catalysed reaction is 7-phospho-2-dehydro-3-deoxy-D-arabino-heptonate = 3-dehydroquinate + phosphate. The protein operates within metabolic intermediate biosynthesis; chorismate biosynthesis; chorismate from D-erythrose 4-phosphate and phosphoenolpyruvate: step 2/7. Its function is as follows. Catalyzes the conversion of 3-deoxy-D-arabino-heptulosonate 7-phosphate (DAHP) to dehydroquinate (DHQ). This Escherichia coli O127:H6 (strain E2348/69 / EPEC) protein is 3-dehydroquinate synthase.